We begin with the raw amino-acid sequence, 790 residues long: PAN2-PAN3 deadenylation complex subunit PAN3 (790 aa).

Disordered regions lie at residues 166–191 (IAQQ…AVSA) and 235–259 (AMIS…ASPI). Low complexity predominate over residues 168–191 (QQQPQHPQKQQQHPPSVGGGAVSA). The segment at 369–655 (DAAEAAQHAL…SVTDLMPMIG (287 aa)) is pseudokinase domain. ATP is bound by residues arginine 423, 472 to 479 (DYHPGSQT), and 552 to 553 (TK). Residues 656-694 (ARFYTQLDALQSKIDMQEDELAKEMENGRLYRILVKLNS) are a coiled coil. The segment at 695–790 (INERPDFNLD…FSELMSSAAN (96 aa)) is knob domain.

Belongs to the protein kinase superfamily. PAN3 family. Homodimer. Forms a heterotrimer with a catalytic subunit PAN2 to form the poly(A)-nuclease (PAN) deadenylation complex. Interacts (via PAM-2 motif) with poly(A)-binding protein (via PABC domain), conferring substrate specificity of the enzyme complex. Interacts with the GW182 family protein gw. Interacts with Gyf.

The protein localises to the cytoplasm. Its subcellular location is the P-body. In terms of biological role, regulatory subunit of the poly(A)-nuclease (PAN) deadenylation complex, one of two cytoplasmic mRNA deadenylases involved in general and miRNA-mediated mRNA turnover. PAN specifically shortens poly(A) tails of RNA and the activity is stimulated by poly(A)-binding protein (PABP). PAN deadenylation is followed by rapid degradation of the shortened mRNA tails by the CCR4-NOT complex. Deadenylated mRNAs are then degraded by two alternative mechanisms, namely exosome-mediated 3'-5' exonucleolytic degradation, or deadenylation-dependent mRNA decaping and subsequent 5'-3' exonucleolytic degradation by XRN1. PAN3 acts as a positive regulator for PAN activity, recruiting the catalytic subunit PAN2 to mRNA via its interaction with RNA and PABP, and to miRNA targets via its interaction with GW182 family proteins. The protein is PAN2-PAN3 deadenylation complex subunit PAN3 of Drosophila melanogaster (Fruit fly).